The sequence spans 371 residues: Cytochrome b (371 aa).

A run of 4 helical transmembrane segments spans residues 25–45 (FGSM…FLAV), 69–90 (WMMQ…YIHI), 105–125 (WLSG…GYVL), and 170–190 (FSAL…LHIM). Heme b contacts are provided by histidine 75 and histidine 89. Heme b contacts are provided by histidine 174 and histidine 188. Residue histidine 193 coordinates a ubiquinone. The next 4 membrane-spanning stretches (helical) occupy residues 218-238 (YKDL…VSFL), 280-300 (LGGA…PFTH), 312-332 (IMQL…WSAT), and 339-358 (FTVI…IMNP).

It belongs to the cytochrome b family. The cytochrome bc1 complex contains 3 respiratory subunits (MT-CYB, CYC1 and UQCRFS1), 2 core proteins (UQCRC1 and UQCRC2) and probably 6 low-molecular weight proteins. It depends on heme b as a cofactor.

The protein resides in the mitochondrion inner membrane. Functionally, component of the ubiquinol-cytochrome c reductase complex (complex III or cytochrome b-c1 complex) that is part of the mitochondrial respiratory chain. The b-c1 complex mediates electron transfer from ubiquinol to cytochrome c. Contributes to the generation of a proton gradient across the mitochondrial membrane that is then used for ATP synthesis. The chain is Cytochrome b (MT-CYB) from Eryx elegans (Central Asian sand boa).